The sequence spans 104 residues: Protein MGF 110-2L (104 aa).

A signal peptide spans 1–31; that stretch reads MRFFSYLGLLLAGLTSLQGFSTDNLLEEELR.

Belongs to the asfivirus MGF 110 family.

Plays a role in virus cell tropism, and may be required for efficient virus replication in macrophages. This is Protein MGF 110-2L from African swine fever virus (strain Badajoz 1971 Vero-adapted) (Ba71V).